A 59-amino-acid chain; its full sequence is Large ribosomal subunit protein uL30 (59 aa).

This sequence belongs to the universal ribosomal protein uL30 family. In terms of assembly, part of the 50S ribosomal subunit.

The chain is Large ribosomal subunit protein uL30 from Sodalis glossinidius (strain morsitans).